The sequence spans 1042 residues: Probable inorganic carbon transporter subunit DabA (1042 aa).

Zn(2+) contacts are provided by Cys-462, Asp-464, His-721, and Cys-736.

It belongs to the inorganic carbon transporter (TC 9.A.2) DabA family. Forms a complex with DabB. Requires Zn(2+) as cofactor.

It is found in the cell inner membrane. Part of an energy-coupled inorganic carbon pump. The chain is Probable inorganic carbon transporter subunit DabA from Nitrosomonas eutropha (strain DSM 101675 / C91 / Nm57).